The primary structure comprises 446 residues: Tubulin beta chain (446 aa).

Gln11, Glu69, Ser138, Gly142, Thr143, Gly144, Asn204, and Asn226 together coordinate GTP. Glu69 is a binding site for Mg(2+). Residues Gln426–Met446 are disordered. Residues Thr429–Met446 show a composition bias toward acidic residues.

Belongs to the tubulin family. Dimer of alpha and beta chains. A typical microtubule is a hollow water-filled tube with an outer diameter of 25 nm and an inner diameter of 15 nM. Alpha-beta heterodimers associate head-to-tail to form protofilaments running lengthwise along the microtubule wall with the beta-tubulin subunit facing the microtubule plus end conferring a structural polarity. Microtubules usually have 13 protofilaments but different protofilament numbers can be found in some organisms and specialized cells. Mg(2+) is required as a cofactor.

It is found in the cytoplasm. The protein resides in the cytoskeleton. Its function is as follows. Tubulin is the major constituent of microtubules, a cylinder consisting of laterally associated linear protofilaments composed of alpha- and beta-tubulin heterodimers. Microtubules grow by the addition of GTP-tubulin dimers to the microtubule end, where a stabilizing cap forms. Below the cap, tubulin dimers are in GDP-bound state, owing to GTPase activity of alpha-tubulin. The chain is Tubulin beta chain from Euplotes crassus.